We begin with the raw amino-acid sequence, 96 residues long: Large ribosomal subunit protein bL28 (96 aa).

This sequence belongs to the bacterial ribosomal protein bL28 family.

This chain is Large ribosomal subunit protein bL28, found in Methylobacterium nodulans (strain LMG 21967 / CNCM I-2342 / ORS 2060).